The sequence spans 379 residues: 2-nitroimidazole nitrohydrolase (379 aa).

Cysteine 357 serves as the catalytic Amidino-cysteine intermediate.

This sequence belongs to the arginine deiminase family.

The enzyme catalyses 2-nitroimidazole + H2O = 1,3-dihydro-2H-imidazol-2-one + nitrite + H(+). In terms of biological role, involved in the biodegradation of 2-Nitroimidazole (2NI) which is a natural antibiotic and an analog of the synthetic nitroimidazoles used for treatment of tuberculosis, Chagas disease (also called American Trypanosomiasis) and cancer. Catalyzes the hydrolytic denitration of 2NI to produce imidazol-2-one and nitrite. It is also active against the 2NI synthetic derivative benznidazole. NnhA confers drug resistance to 2NI. The sequence is that of 2-nitroimidazole nitrohydrolase (nnhA) from Mycobacterium sp. (strain JS330).